The sequence spans 874 residues: Alanine--tRNA ligase (874 aa).

The Zn(2+) site is built by H564, H568, C665, and H669.

This sequence belongs to the class-II aminoacyl-tRNA synthetase family. Requires Zn(2+) as cofactor.

The protein resides in the cytoplasm. It catalyses the reaction tRNA(Ala) + L-alanine + ATP = L-alanyl-tRNA(Ala) + AMP + diphosphate. In terms of biological role, catalyzes the attachment of alanine to tRNA(Ala) in a two-step reaction: alanine is first activated by ATP to form Ala-AMP and then transferred to the acceptor end of tRNA(Ala). Also edits incorrectly charged Ser-tRNA(Ala) and Gly-tRNA(Ala) via its editing domain. This Burkholderia lata (strain ATCC 17760 / DSM 23089 / LMG 22485 / NCIMB 9086 / R18194 / 383) protein is Alanine--tRNA ligase.